The following is a 95-amino-acid chain: Putative monooxygenase YcnE (95 aa).

Residues 2-93 (IVLQAYIKVK…APLDVVRTEL (92 aa)) enclose the ABM domain. Position 24 is a phosphoserine (Ser24).

Belongs to the LsrG family.

Putative monooxygenase that may contribute to the degradation of aromatic compounds. The polypeptide is Putative monooxygenase YcnE (ycnE) (Bacillus subtilis (strain 168)).